Reading from the N-terminus, the 241-residue chain is Proteasome subunit alpha (241 aa).

It belongs to the peptidase T1A family. In terms of assembly, the 20S proteasome core is composed of 14 alpha and 14 beta subunits that assemble into four stacked heptameric rings, resulting in a barrel-shaped structure. The two inner rings, each composed of seven catalytic beta subunits, are sandwiched by two outer rings, each composed of seven alpha subunits. The catalytic chamber with the active sites is on the inside of the barrel. Has a gated structure, the ends of the cylinder being occluded by the N-termini of the alpha-subunits. Is capped at one or both ends by the proteasome regulatory ATPase, PAN.

It is found in the cytoplasm. With respect to regulation, the formation of the proteasomal ATPase PAN-20S proteasome complex, via the docking of the C-termini of PAN into the intersubunit pockets in the alpha-rings, triggers opening of the gate for substrate entry. Interconversion between the open-gate and close-gate conformations leads to a dynamic regulation of the 20S proteasome proteolysis activity. Functionally, component of the proteasome core, a large protease complex with broad specificity involved in protein degradation. This Methanosphaerula palustris (strain ATCC BAA-1556 / DSM 19958 / E1-9c) protein is Proteasome subunit alpha.